The following is a 626-amino-acid chain: Chaperone protein HtpG (626 aa).

Positions 1-341 (METKQFKAES…SEDLSLNISR (341 aa)) are a; substrate-binding. The b stretch occupies residues 342 to 552 (EILQHDRQLK…EGELSIEMEK (211 aa)). The disordered stretch occupies residues 490 to 509 (DLGIEGEEKENTSNSDDKEN). Residues 498 to 509 (KENTSNSDDKEN) are compositionally biased toward basic and acidic residues. Residues 553–626 (VLNAMPNNQN…FTNNICKIMK (74 aa)) are c.

This sequence belongs to the heat shock protein 90 family. In terms of assembly, homodimer.

Its subcellular location is the cytoplasm. In terms of biological role, molecular chaperone. Has ATPase activity. The sequence is that of Chaperone protein HtpG from Clostridium botulinum (strain ATCC 19397 / Type A).